The sequence spans 35 residues: Basic endochitinase CH1 (35 aa).

It belongs to the glycosyl hydrolase 19 family. Chitinase class I subfamily.

The catalysed reaction is Random endo-hydrolysis of N-acetyl-beta-D-glucosaminide (1-&gt;4)-beta-linkages in chitin and chitodextrins.. Defense against chitin-containing fungal pathogens. This Castanea sativa (Sweet chestnut) protein is Basic endochitinase CH1.